A 336-amino-acid chain; its full sequence is Glycerol-3-phosphate dehydrogenase [NAD(P)+] (336 aa).

Residues tryptophan 16 and lysine 109 each coordinate NADPH. Sn-glycerol 3-phosphate is bound by residues lysine 109, glycine 137, and serine 139. An NADPH-binding site is contributed by alanine 141. Positions 192, 245, 255, 256, and 257 each coordinate sn-glycerol 3-phosphate. Catalysis depends on lysine 192, which acts as the Proton acceptor. An NADPH-binding site is contributed by arginine 256. Residues valine 280 and glutamate 282 each coordinate NADPH.

This sequence belongs to the NAD-dependent glycerol-3-phosphate dehydrogenase family.

The protein resides in the cytoplasm. The catalysed reaction is sn-glycerol 3-phosphate + NAD(+) = dihydroxyacetone phosphate + NADH + H(+). It carries out the reaction sn-glycerol 3-phosphate + NADP(+) = dihydroxyacetone phosphate + NADPH + H(+). The protein operates within membrane lipid metabolism; glycerophospholipid metabolism. Functionally, catalyzes the reduction of the glycolytic intermediate dihydroxyacetone phosphate (DHAP) to sn-glycerol 3-phosphate (G3P), the key precursor for phospholipid synthesis. The sequence is that of Glycerol-3-phosphate dehydrogenase [NAD(P)+] from Hyphomonas neptunium (strain ATCC 15444).